The primary structure comprises 410 residues: Single Ig IL-1-related receptor (410 aa).

Over 1 to 118 (MPGVCDRAPD…TLQRAGPTSH (118 aa)) the chain is Extracellular. The 101-residue stretch at 9-109 (PDFLSPSEDQ…IQNISFSSFT (101 aa)) folds into the Ig-like C2-type domain. 4 N-linked (GlcNAc...) asparagine glycosylation sites follow: Asn-31, Asn-73, Asn-86, and Asn-102. Cysteines 32 and 98 form a disulfide. The chain crosses the membrane as a helical; Signal-anchor for type III membrane protein span at residues 119 to 139 (VAAVLASLLVLLALLLAALLY). The Cytoplasmic segment spans residues 140–410 (VKCRLNVLLW…FYCLVSKDDM (271 aa)). Residues 163-307 (KLYDAYVSYS…DFWKEVQLAL (145 aa)) form the TIR domain. The interval 340-390 (EGRALDSEVDPDPEGDLGVRGPVFGEPSAPPHTSGVSLGESRSSEVDVSDL) is disordered. Ser-383 bears the Phosphoserine mark.

The protein belongs to the interleukin-1 receptor family. As to quaternary structure, interacts with IL1R1, IRAK1, TLR4, TLR5, TLR9 and TRAF6. Upon IL-1 stimulation found in a complex at least composed of IL1R1, SIGIRR, MYD88, IRAK1 and TRAF6. Upon stimulation with LPC found in a complex at least composed of TLR4, SIG1IR, MYD88, IRAK1 and TRAF6. Interacts with PALM3. As to expression, mainly expressed in epithelial tissues such as kidney, lung and gut.

Its subcellular location is the membrane. In terms of biological role, acts as a negative regulator of the Toll-like and IL-1R receptor signaling pathways. Attenuates the recruitment of receptor-proximal signaling components to the TLR4 receptor, probably through an TIR-TIR domain interaction with TLR4. Through its extracellular domain interferes with the heterodimerization of Il1R1 and IL1RAP. This is Single Ig IL-1-related receptor (SIGIRR) from Homo sapiens (Human).